A 1400-amino-acid chain; its full sequence is ABC transporter G family member 30 (1400 aa).

N116 is a glycosylation site (N-linked (GlcNAc...) asparagine). In terms of domain architecture, ABC transporter 1 spans 141–414; the sequence is LLSEFICSKK…FEEFGFKCPE (274 aa). An ATP-binding site is contributed by 174–181; sequence GPPGCGKT. N-linked (GlcNAc...) asparagine glycosylation is present at N472. The 213-residue stretch at 492–704 folds into the ABC transmembrane type-2 1 domain; that stretch reads EMLKACSRRE…AEIGLTANEF (213 aa). 7 helical membrane passes run 510-530, 553-573, 582-602, 628-648, 652-672, 679-699, and 738-758; these read FIYL…MTVF, LFRL…RLGV, FYPA…LSVL, FLIL…IAAI, IIAS…FGGF, MPAW…EIGL, and TAFG…VLAL. One can recognise an ABC transporter 2 domain in the interval 808–1053; it reads VTFQNVQYYI…VIEYFESFSG (246 aa). Residue 845-852 coordinates ATP; it reads GVSGAGKT. Residues N899 and N1040 are each glycosylated (N-linked (GlcNAc...) asparagine). Residues 1125 to 1339 form the ABC transmembrane type-2 2 domain; sequence VQLKACLWKQ…VLEGLLSSQY (215 aa). Helical transmembrane passes span 1144-1164, 1179-1199, 1228-1248, 1263-1283, 1289-1309, 1317-1337, and 1372-1392; these read HNIT…LLFW, IFGS…AAVI, VLIE…IVYP, LYSI…MVAL, MAVT…GFVI, WWIW…LLSS, and VVAF…AFFM.

This sequence belongs to the ABC transporter superfamily. ABCG family. PDR (TC 3.A.1.205) subfamily. In terms of tissue distribution, confined to roots. In seeds, mainly expressed in the embryo and, to a lesser extent, in the endosperm.

Its subcellular location is the cell membrane. It carries out the reaction abscisate(out) + ATP + H2O = abscisate(in) + ADP + phosphate + H(+). In terms of biological role, together with ABCG40, import into the embryo the abscisic acid (ABA) delivered from the endosperm via ABCG25 and ABCG31-mediated export to suppress radicle extension and subsequent embryonic growth. Involved in root secretion of phytochemicals (phenolics and sugars) which regulate soil microbiota, influencing both fungal and bacterial communities. May be a general defense protein. This is ABC transporter G family member 30 from Arabidopsis thaliana (Mouse-ear cress).